The chain runs to 268 residues: tRNA pseudouridine synthase A (268 aa).

D52 (nucleophile) is an active-site residue. Y110 is a substrate binding site.

The protein belongs to the tRNA pseudouridine synthase TruA family. In terms of assembly, homodimer.

It carries out the reaction uridine(38/39/40) in tRNA = pseudouridine(38/39/40) in tRNA. Its function is as follows. Formation of pseudouridine at positions 38, 39 and 40 in the anticodon stem and loop of transfer RNAs. The polypeptide is tRNA pseudouridine synthase A (Prochlorococcus marinus (strain MIT 9515)).